A 495-amino-acid chain; its full sequence is UDP-glycosyltransferase 73C6 (495 aa).

UDP-alpha-D-glucose-binding positions include Ser296, 356 to 358, 373 to 381, and 395 to 398; these read SPQ, HCGWNSTLE, and FADQ. The tract at residues 449-475 is disordered; sequence SDDAKERRRRAKELGESAHKAVEEGGS. A compositionally biased stretch (basic and acidic residues) spans 450-471; the sequence is DDAKERRRRAKELGESAHKAVE.

Belongs to the UDP-glycosyltransferase family. As to expression, expressed in leaves and flowers, and at a very low level in roots.

Its function is as follows. Acts as a UDP-glucose:flavonol-3-O-glycoside-7-O-glucosyltransferase. 6- and 7-hydroxyflavone, but not 3- or 5-hydroxyflavone are accepted as substrates. Possesses low quercetin 3-O-glucosyltransferase, 7-O-glucosyltransferase and 4'-O-glucosyltransferase activities in vitro. In Arabidopsis thaliana (Mouse-ear cress), this protein is UDP-glycosyltransferase 73C6 (UGT73C6).